The following is a 220-amino-acid chain: uncharacterized protein (220 aa).

This is an uncharacterized protein from Methanocaldococcus jannaschii (strain ATCC 43067 / DSM 2661 / JAL-1 / JCM 10045 / NBRC 100440) (Methanococcus jannaschii).